Here is a 368-residue protein sequence, read N- to C-terminus: Microtubule-associated protein Jupiter (368 aa).

Ser30 bears the Phosphoserine mark. Residue Thr41 is modified to Phosphothreonine. The segment covering 81 to 93 (RRGQKSVDSHSRL) has biased composition (basic and acidic residues). A disordered region spans residues 81–106 (RRGQKSVDSHSRLFGEPSRPITPGKN). Phosphothreonine is present on Thr102. Residues Ser111, Ser146, and Ser157 each carry the phosphoserine modification. Low complexity-rich tracts occupy residues 129–157 (NGNT…VSSS) and 238–248 (GRYGYSSQSRR). Disordered stretches follow at residues 129 to 164 (NGNT…LKIN), 196 to 256 (SQGN…SPLN), and 316 to 368 (KPKK…SGLW). Residues 337-354 (GSDSAQTPTMNGANQVIN) are compositionally biased toward polar residues.

This sequence belongs to the MAP Jupiter family.

The protein resides in the nucleus. The protein localises to the cytoplasm. It is found in the cytoskeleton. It localises to the spindle. In terms of biological role, binds to all microtubule populations. The chain is Microtubule-associated protein Jupiter from Drosophila willistoni (Fruit fly).